We begin with the raw amino-acid sequence, 337 residues long: Heme A synthase (337 aa).

Transmembrane regions (helical) follow at residues 3 to 23, 94 to 114, 120 to 140, 154 to 174, 191 to 211, 248 to 268, and 289 to 309; these read LARW…IGGI, VIGL…MIPA, LLAL…MVAS, LSAH…TALD, GVAW…AWVA, FLLH…LVVL, and TMVV…IAVA. A heme-binding site is contributed by H254. H310 is a heme binding site. The chain crosses the membrane as a helical span at residues 311–331; the sequence is QLTGALLVISTAWAAHAIGTA.

Belongs to the COX15/CtaA family. Type 2 subfamily. In terms of assembly, interacts with CtaB. Requires heme b as cofactor.

Its subcellular location is the cell membrane. It carries out the reaction Fe(II)-heme o + 2 A + H2O = Fe(II)-heme a + 2 AH2. Its pathway is porphyrin-containing compound metabolism; heme A biosynthesis; heme A from heme O: step 1/1. Its function is as follows. Catalyzes the conversion of heme O to heme A by two successive hydroxylations of the methyl group at C8. The first hydroxylation forms heme I, the second hydroxylation results in an unstable dihydroxymethyl group, which spontaneously dehydrates, resulting in the formyl group of heme A. The protein is Heme A synthase of Erythrobacter litoralis (strain HTCC2594).